Reading from the N-terminus, the 443-residue chain is Amino-acid acetyltransferase (443 aa).

Residues 296-435 form the N-acetyltransferase domain; it reads EQIRRATIND…KEMYNYQRRS (140 aa).

This sequence belongs to the acetyltransferase family. ArgA subfamily. In terms of assembly, homohexamer.

It localises to the cytoplasm. The catalysed reaction is L-glutamate + acetyl-CoA = N-acetyl-L-glutamate + CoA + H(+). Its pathway is amino-acid biosynthesis; L-arginine biosynthesis; N(2)-acetyl-L-ornithine from L-glutamate: step 1/4. The protein is Amino-acid acetyltransferase of Enterobacter sp. (strain 638).